Reading from the N-terminus, the 448-residue chain is Trigger factor (448 aa).

One can recognise a PPIase FKBP-type domain in the interval 172 to 257; that stretch reads GDRVTVDFVG…MKKIEWPHLP (86 aa).

This sequence belongs to the FKBP-type PPIase family. Tig subfamily.

The protein localises to the cytoplasm. The catalysed reaction is [protein]-peptidylproline (omega=180) = [protein]-peptidylproline (omega=0). Functionally, involved in protein export. Acts as a chaperone by maintaining the newly synthesized protein in an open conformation. Functions as a peptidyl-prolyl cis-trans isomerase. The chain is Trigger factor from Burkholderia orbicola (strain MC0-3).